We begin with the raw amino-acid sequence, 3779 residues long: Protein DDB_G0268328 (3779 aa).

Disordered regions lie at residues 24–56 (RQIKSQNKLQNKSQNNGNNNNNKDNNNINKDGS), 1001–1028 (HEDEEEEGDGDNSNNSNSQDSDGDDDDD), 1137–1165 (QDSTLPKRKQHGYYHQQQQQQQYHQQQQQ), 1513–1538 (PTNSIYNNNNNNNNNNNNTNSSSLLS), 1656–1690 (ETTVLEKETKETKDNNLENNNNNTNNSNNNNNNKE), 2027–2054 (SNSSNNNNNNNDGSTTSTTTLNRSDSNN), 2144–2184 (NNNN…NNSS), 2280–2325 (ISTT…NEQQ), 2508–2527 (QINNNNNNNEKEEEEEREEG), 2720–2748 (DGNNNNNNNNNQNNNNQNNNNNQNNNDSS), 2975–3030 (ESND…DSIK), and 3427–3450 (QSNTLNGTGGGGGNGGGNNGSGKL). Composition is skewed to low complexity over residues 26–56 (IKSQNKLQNKSQNNGNNNNNKDNNNINKDGS), 1011–1020 (DNSNNSNSQD), 1149–1165 (YYHQQQQQQQYHQQQQQ), and 1515–1538 (NSIYNNNNNNNNNNNNTNSSSLLS). Residues 1656–1671 (ETTVLEKETKETKDNN) show a composition bias toward basic and acidic residues. The segment covering 1672–1687 (LENNNNNTNNSNNNNN) has biased composition (low complexity). Low complexity-rich tracts occupy residues 2144-2182 (NNNNNNNNNNNNNNNNNNNNNNNNNNNNNNNNNNNNNNN) and 2285-2322 (NNNNNNNNNNNNNNNNNNNNNNNNNNNNNNNNNNNNNN). 2 stretches are compositionally biased toward low complexity: residues 2722–2745 (NNNNNNNNNQNNNNQNNNNNQNNN) and 3015–3030 (SVNNNNNNNSNSDSIK). Over residues 3433–3446 (GTGGGGGNGGGNNG) the composition is skewed to gly residues.

The protein is Protein DDB_G0268328 of Dictyostelium discoideum (Social amoeba).